The chain runs to 363 residues: 3-isopropylmalate dehydrogenase (363 aa).

78-91 (XXXXXXXXXXXXXX) lines the NAD(+) pocket. The substrate site is built by arginine 99, arginine 109, arginine 138, and aspartate 227. 3 residues coordinate Mg(2+): aspartate 227, aspartate 251, and aspartate 255. 285 to 297 (GSAPDIEGKNIAN) provides a ligand contact to NAD(+).

It belongs to the isocitrate and isopropylmalate dehydrogenases family. LeuB type 1 subfamily. As to quaternary structure, homodimer. It depends on Mg(2+) as a cofactor. Mn(2+) is required as a cofactor.

It localises to the cytoplasm. The enzyme catalyses (2R,3S)-3-isopropylmalate + NAD(+) = 4-methyl-2-oxopentanoate + CO2 + NADH. It functions in the pathway amino-acid biosynthesis; L-leucine biosynthesis; L-leucine from 3-methyl-2-oxobutanoate: step 3/4. In terms of biological role, catalyzes the oxidation of 3-carboxy-2-hydroxy-4-methylpentanoate (3-isopropylmalate) to 3-carboxy-4-methyl-2-oxopentanoate. The product decarboxylates to 4-methyl-2 oxopentanoate. This is 3-isopropylmalate dehydrogenase from Buchnera aphidicola subsp. Uroleucon solidaginis.